A 366-amino-acid chain; its full sequence is Patr class I histocompatibility antigen, C alpha chain (366 aa).

Positions 1 to 24 are cleaved as a signal peptide; the sequence is MRVTAPRTLLLLLSGGLALTETWA. Residues 25–114 are alpha-1; it reads GSHSLRYFDT…LRGYYNQSED (90 aa). At 25 to 308 the chain is on the extracellular side; it reads GSHSLRYFDT…KPTSQPTIPI (284 aa). Asn-110 is a glycosylation site (N-linked (GlcNAc...) asparagine). Residues 115–206 are alpha-2; that stretch reads GSHTLQWMYG…ENGKETLQRT (92 aa). Cystine bridges form between Cys-125-Cys-192 and Cys-227-Cys-283. An alpha-3 region spans residues 207 to 298; that stretch reads ECPKTHMTHH…GLPEPLTLRW (92 aa). An Ig-like C1-type domain is found at 209–297; the sequence is PKTHMTHHPV…EGLPEPLTLR (89 aa). The connecting peptide stretch occupies residues 299–308; the sequence is KPTSQPTIPI. The helical transmembrane segment at 309-332 threads the bilayer; that stretch reads VGIVAGLAVLAVLAVLGAVVTAMM. The Cytoplasmic portion of the chain corresponds to 333–366; sequence CRRKSSGGKGGSCSQAACSNSAQGSDESLIACKA. Phosphoserine occurs at positions 357 and 360.

This sequence belongs to the MHC class I family. Heterodimer of an alpha chain and a beta chain (beta-2-microglobulin).

Its subcellular location is the membrane. In terms of biological role, involved in the presentation of foreign antigens to the immune system. This is Patr class I histocompatibility antigen, C alpha chain from Pan troglodytes (Chimpanzee).